Consider the following 101-residue polypeptide: Small ribosomal subunit protein uS14 (101 aa).

It belongs to the universal ribosomal protein uS14 family. Part of the 30S ribosomal subunit. Contacts proteins S3 and S10.

In terms of biological role, binds 16S rRNA, required for the assembly of 30S particles and may also be responsible for determining the conformation of the 16S rRNA at the A site. The protein is Small ribosomal subunit protein uS14 of Paramagnetospirillum magneticum (strain ATCC 700264 / AMB-1) (Magnetospirillum magneticum).